Reading from the N-terminus, the 969-residue chain is RNA polymerase-associated protein RapA (969 aa).

The region spanning 162–339 is the Helicase ATP-binding domain; sequence EVGQRVAPRV…FARLALLDAD (178 aa). 175 to 182 provides a ligand contact to ATP; that stretch reads DEVGLGKT. The short motif at 285–288 is the DEAH box element; that stretch reads DEAH. Positions 492–663 constitute a Helicase C-terminal domain; that stretch reads RIEWLITFLK…GFLKNPQAVG (172 aa).

This sequence belongs to the SNF2/RAD54 helicase family. RapA subfamily. Interacts with the RNAP. Has a higher affinity for the core RNAP than for the holoenzyme. Its ATPase activity is stimulated by binding to RNAP.

Transcription regulator that activates transcription by stimulating RNA polymerase (RNAP) recycling in case of stress conditions such as supercoiled DNA or high salt concentrations. Probably acts by releasing the RNAP, when it is trapped or immobilized on tightly supercoiled DNA. Does not activate transcription on linear DNA. Probably not involved in DNA repair. The sequence is that of RNA polymerase-associated protein RapA from Actinobacillus pleuropneumoniae serotype 7 (strain AP76).